Reading from the N-terminus, the 442-residue chain is Histidinol dehydrogenase (442 aa).

A disordered region spans residues 1–20 (MLNVTDLRGQTPSKSDIRRA). Positions 129, 193, and 218 each coordinate NAD(+). Substrate contacts are provided by Thr241, Gln263, and His266. Zn(2+)-binding residues include Gln263 and His266. Active-site proton acceptor residues include Glu332 and His333. Substrate contacts are provided by His333, Asp366, Glu420, and His425. Residue Asp366 participates in Zn(2+) binding. Residue His425 coordinates Zn(2+).

It belongs to the histidinol dehydrogenase family. Requires Zn(2+) as cofactor.

The catalysed reaction is L-histidinol + 2 NAD(+) + H2O = L-histidine + 2 NADH + 3 H(+). Its pathway is amino-acid biosynthesis; L-histidine biosynthesis; L-histidine from 5-phospho-alpha-D-ribose 1-diphosphate: step 9/9. Catalyzes the sequential NAD-dependent oxidations of L-histidinol to L-histidinaldehyde and then to L-histidine. The protein is Histidinol dehydrogenase of Corynebacterium glutamicum (strain ATCC 13032 / DSM 20300 / JCM 1318 / BCRC 11384 / CCUG 27702 / LMG 3730 / NBRC 12168 / NCIMB 10025 / NRRL B-2784 / 534).